Consider the following 336-residue polypeptide: 4-hydroxy-3-methylbut-2-enyl diphosphate reductase (336 aa).

A disordered region spans residues Met1–Thr23. Position 36 (Cys36) interacts with [4Fe-4S] cluster. His65 and His98 together coordinate (2E)-4-hydroxy-3-methylbut-2-enyl diphosphate. Dimethylallyl diphosphate is bound by residues His65 and His98. Isopentenyl diphosphate-binding residues include His65 and His98. Cys120 is a [4Fe-4S] cluster binding site. (2E)-4-hydroxy-3-methylbut-2-enyl diphosphate is bound at residue His148. Dimethylallyl diphosphate is bound at residue His148. An isopentenyl diphosphate-binding site is contributed by His148. Glu150 functions as the Proton donor in the catalytic mechanism. Thr190 is a (2E)-4-hydroxy-3-methylbut-2-enyl diphosphate binding site. [4Fe-4S] cluster is bound at residue Cys220. Positions 248, 249, 250, and 293 each coordinate (2E)-4-hydroxy-3-methylbut-2-enyl diphosphate. Dimethylallyl diphosphate-binding residues include Ser248, Ser249, Asn250, and Ser293. 4 residues coordinate isopentenyl diphosphate: Ser248, Ser249, Asn250, and Ser293.

Belongs to the IspH family. It depends on [4Fe-4S] cluster as a cofactor.

The catalysed reaction is isopentenyl diphosphate + 2 oxidized [2Fe-2S]-[ferredoxin] + H2O = (2E)-4-hydroxy-3-methylbut-2-enyl diphosphate + 2 reduced [2Fe-2S]-[ferredoxin] + 2 H(+). The enzyme catalyses dimethylallyl diphosphate + 2 oxidized [2Fe-2S]-[ferredoxin] + H2O = (2E)-4-hydroxy-3-methylbut-2-enyl diphosphate + 2 reduced [2Fe-2S]-[ferredoxin] + 2 H(+). Its pathway is isoprenoid biosynthesis; dimethylallyl diphosphate biosynthesis; dimethylallyl diphosphate from (2E)-4-hydroxy-3-methylbutenyl diphosphate: step 1/1. The protein operates within isoprenoid biosynthesis; isopentenyl diphosphate biosynthesis via DXP pathway; isopentenyl diphosphate from 1-deoxy-D-xylulose 5-phosphate: step 6/6. Its function is as follows. Catalyzes the conversion of 1-hydroxy-2-methyl-2-(E)-butenyl 4-diphosphate (HMBPP) into a mixture of isopentenyl diphosphate (IPP) and dimethylallyl diphosphate (DMAPP). Acts in the terminal step of the DOXP/MEP pathway for isoprenoid precursor biosynthesis. The polypeptide is 4-hydroxy-3-methylbut-2-enyl diphosphate reductase (Corynebacterium efficiens (strain DSM 44549 / YS-314 / AJ 12310 / JCM 11189 / NBRC 100395)).